A 116-amino-acid polypeptide reads, in one-letter code: Cocaine- and amphetamine-regulated transcript protein (116 aa).

An N-terminal signal peptide occupies residues 1–27 (MESPRLRLLPLLGAALLLLLPLLGALA). Tyr-41 bears the Phosphotyrosine mark. Position 48 is a phosphoserine (Ser-48). 3 disulfides stabilise this stretch: Cys-82/Cys-100, Cys-88/Cys-108, and Cys-102/Cys-115.

This sequence belongs to the CART family.

The protein localises to the secreted. Its function is as follows. Satiety factor closely associated with the actions of leptin and neuropeptide y; this anorectic peptide inhibits both normal and starvation-induced feeding and completely blocks the feeding response induced by neuropeptide Y and regulated by leptin in the hypothalamus. In Bos taurus (Bovine), this protein is Cocaine- and amphetamine-regulated transcript protein (CARTPT).